The primary structure comprises 820 residues: MQNWALVIGINRYWRADACLKGAVKDALKMREWLTSIDGGAVPSRNLILLLSPHDDPESCGGASALPATQDMIIQAIEQIFRKSGEEGDRFFFYYSGHGLTARMSFSNESGIIPNDFSDTLTNKALSLRSIFERFQSTRFREQFFFIDACRNIPWEGEREFLISQYPLPKPPKPPVFPQFIMYATSPGVKAVEIHEAGNERGAFTDALLAGLRGTGNAKLWHEEDREYMVRWDNLFRFVEEEVIRRRLSVSENRVPPLIQEPRQFGERGSCNPTLASLPAEVFPEVSLDVHLDPMTVASQTEVIVGDLGGVLRREFPVTALPVHFDLQPRTYSIRTSTPDFRSEKRYYQVDLYGPAEVSIKMVPGTGYSTPVSPSSGVSKSVDGNTATASVLMRSHDPLAYLELLDNSGTTIETGIGQIYRPRVKPGFYRLRLRTPEGIPHERLVELSSGESADITLDAPPQTDSGLFTHIAFTSHMYQGEPNIIQPSEAIGPAQSMHLSTILALAGGAVNEDSSYGGKLRGLGITSFRNIAGEEATSGMQILFGNEVTAPAFTDNYLSAVRLRCWGIDRGIPAEYRQPLHVADITGLAQATWEMEPGSYLLSIELPDRMPVVFPVAALSNRLSLLVVTQDATGVVNFFRYLPSLKDELPGDPRYEAARFPVLRRLEYIQRSCMVGRFEQAYQNARELLNAKWIDPMAGLLGSYLLMRLGKSDELCIPARNLSECFGELSDSHVIAAEYEAGIGNEEKAADAFRRALDNGLPIMSDCLTKLIYGMERYGIEHPRAALAKSYYSHGIKGLLWSACPRKACEAAPGETGADA.

The protein belongs to the peptidase C25 family.

Its function is as follows. Probably a dedicated protease for substrate gasdermin bGSDM; cleaves the bGSDM precursor, releasing the pore-forming moiety, which integrates into the membrane and triggers cell death. Involved in defense against bacteriophages. Expression of bacterial gasdermin (bGSDM) and this neighboring protease is toxic in E.coli. The sequence is that of Probable protease Ga0182885_104520 from Desulfuromonadales bacterium.